A 320-amino-acid polypeptide reads, in one-letter code: Cytochrome f (320 aa).

The N-terminal stretch at 1-35 (MENRNTFSWVKEQITRSISVSIMIYVITRTSISNA) is a signal peptide. Heme is bound by residues Y36, C56, C59, and H60. The chain crosses the membrane as a helical span at residues 286–305 (VQGLLFFFASVILAQVFLVL).

Belongs to the cytochrome f family. As to quaternary structure, the 4 large subunits of the cytochrome b6-f complex are cytochrome b6, subunit IV (17 kDa polypeptide, petD), cytochrome f and the Rieske protein, while the 4 small subunits are PetG, PetL, PetM and PetN. The complex functions as a dimer. Heme is required as a cofactor.

The protein localises to the plastid. The protein resides in the chloroplast thylakoid membrane. In terms of biological role, component of the cytochrome b6-f complex, which mediates electron transfer between photosystem II (PSII) and photosystem I (PSI), cyclic electron flow around PSI, and state transitions. The polypeptide is Cytochrome f (petA) (Triticum aestivum (Wheat)).